The following is a 26-amino-acid chain: uncharacterized protein (26 aa).

The protein localises to the plastid. The protein resides in the chloroplast. This is an uncharacterized protein from Trieres chinensis (Marine centric diatom).